The primary structure comprises 270 residues: Probable thioesterase BOA10 (270 aa).

It belongs to the AMT4 thioesterase family.

It functions in the pathway polyketide biosynthesis. Functionally, probable thioesterase; part of the gene cluster B that mediates the biosynthesis of botcinic acid and its botcinin derivatives, acetate-derived polyketides that contribute to virulence when combined with the sesquiterpene botrydial. Botcinic acid and its derivatives have been shown to induce chlorosis and necrosis during host plant infection, but also have antifungal activities. Two polyketide synthases, BOA6 and BOA9, are involved in the biosynthesis of botcinins. BOA6 mediates the formation of the per-methylated tetraketide core by condensation of four units of malonyl-CoA with one unit of acetyl-CoA, which would be methylated in activated methylene groups to yield a bicyclic acid intermediate that could then either be converted to botrylactone derivatives or lose the starter acetate unit through a retro-Claisen type C-C bond cleavage to yield botcinin derivatives. The second polyketide synthase, BOA9, is probably required for the biosynthesis of the tetraketide side chain of botcinins. The methyltransferase (MT) domain within BOA6 is probably responsible for the incorporation of four methyl groups. The trans-enoyl reductase BOA5 might take over the enoyl reductase function of BOA6 that misses an ER domain. The monooxygenases BOA2, BOA3 and BOA4 might be involved in further hydroxylations at C4, C5 and C8, whereas BOA7, close to BOA9, could potentially be involved in the hydroxylation at C4 in the side chain of botcinins. The polypeptide is Probable thioesterase BOA10 (Botryotinia fuckeliana (strain B05.10) (Noble rot fungus)).